The chain runs to 233 residues: Transcriptional regulatory protein WalR (233 aa).

The region spanning 4–117 (KVVVVDDEKP…ELIARVKANL (114 aa)) is the Response regulatory domain. The residue at position 53 (Asp53) is a 4-aspartylphosphate. Residues 132–231 (TNEITIKDIV…RRGVGYFLQQ (100 aa)) constitute a DNA-binding region (ompR/PhoB-type).

In terms of processing, phosphorylated by WalK.

The protein resides in the cytoplasm. Functionally, member of the two-component regulatory system WalK/WalR. In Staphylococcus haemolyticus (strain JCSC1435), this protein is Transcriptional regulatory protein WalR (walR).